We begin with the raw amino-acid sequence, 110 residues long: Large ribosomal subunit protein uL22 (110 aa).

Belongs to the universal ribosomal protein uL22 family. As to quaternary structure, part of the 50S ribosomal subunit.

Functionally, this protein binds specifically to 23S rRNA; its binding is stimulated by other ribosomal proteins, e.g. L4, L17, and L20. It is important during the early stages of 50S assembly. It makes multiple contacts with different domains of the 23S rRNA in the assembled 50S subunit and ribosome. Its function is as follows. The globular domain of the protein is located near the polypeptide exit tunnel on the outside of the subunit, while an extended beta-hairpin is found that lines the wall of the exit tunnel in the center of the 70S ribosome. The sequence is that of Large ribosomal subunit protein uL22 from Nitrosococcus oceani (strain ATCC 19707 / BCRC 17464 / JCM 30415 / NCIMB 11848 / C-107).